A 321-amino-acid polypeptide reads, in one-letter code: Lipoyl synthase (321 aa).

[4Fe-4S] cluster contacts are provided by cysteine 68, cysteine 73, cysteine 79, cysteine 94, cysteine 98, cysteine 101, and serine 308. The Radical SAM core domain occupies 80–297 (FNHGTATFMI…KDVAMGLGFS (218 aa)).

Belongs to the radical SAM superfamily. Lipoyl synthase family. [4Fe-4S] cluster is required as a cofactor.

It localises to the cytoplasm. The catalysed reaction is [[Fe-S] cluster scaffold protein carrying a second [4Fe-4S](2+) cluster] + N(6)-octanoyl-L-lysyl-[protein] + 2 oxidized [2Fe-2S]-[ferredoxin] + 2 S-adenosyl-L-methionine + 4 H(+) = [[Fe-S] cluster scaffold protein] + N(6)-[(R)-dihydrolipoyl]-L-lysyl-[protein] + 4 Fe(3+) + 2 hydrogen sulfide + 2 5'-deoxyadenosine + 2 L-methionine + 2 reduced [2Fe-2S]-[ferredoxin]. The protein operates within protein modification; protein lipoylation via endogenous pathway; protein N(6)-(lipoyl)lysine from octanoyl-[acyl-carrier-protein]: step 2/2. Catalyzes the radical-mediated insertion of two sulfur atoms into the C-6 and C-8 positions of the octanoyl moiety bound to the lipoyl domains of lipoate-dependent enzymes, thereby converting the octanoylated domains into lipoylated derivatives. The polypeptide is Lipoyl synthase (Aeromonas hydrophila subsp. hydrophila (strain ATCC 7966 / DSM 30187 / BCRC 13018 / CCUG 14551 / JCM 1027 / KCTC 2358 / NCIMB 9240 / NCTC 8049)).